Here is a 510-residue protein sequence, read N- to C-terminus: Bifunctional pantoate ligase/cytidylate kinase (510 aa).

Residues 1 to 276 (MNKIIIRKTE…CGKTRLIDHV (276 aa)) are pantoate--beta-alanine ligase. Position 29–36 (29–36 (MGNLHDGH)) interacts with ATP. His-36 functions as the Proton donor in the catalytic mechanism. Gln-61 is a binding site for (R)-pantoate. Residue Gln-61 participates in beta-alanine binding. ATP is bound at residue 150-153 (GEKD). Gln-156 provides a ligand contact to (R)-pantoate. 187–190 (FSSR) is an ATP binding site. The interval 277–510 (FLMKRKPIIA…LNIPKEIQLE (234 aa)) is cytidylate kinase.

It in the N-terminal section; belongs to the pantothenate synthetase family. The protein in the C-terminal section; belongs to the cytidylate kinase family. Type 1 subfamily.

Its subcellular location is the cytoplasm. The catalysed reaction is (R)-pantoate + beta-alanine + ATP = (R)-pantothenate + AMP + diphosphate + H(+). It carries out the reaction CMP + ATP = CDP + ADP. It catalyses the reaction dCMP + ATP = dCDP + ADP. It participates in cofactor biosynthesis; (R)-pantothenate biosynthesis; (R)-pantothenate from (R)-pantoate and beta-alanine: step 1/1. Catalyzes the condensation of pantoate with beta-alanine in an ATP-dependent reaction via a pantoyl-adenylate intermediate. Its function is as follows. Catalyzes the transfer of a phosphate group from ATP to either CMP or dCMP to form CDP or dCDP and ADP, respectively. This is Bifunctional pantoate ligase/cytidylate kinase from Prochlorococcus marinus subsp. pastoris (strain CCMP1986 / NIES-2087 / MED4).